The sequence spans 152 residues: Xanthine-guanine phosphoribosyltransferase (152 aa).

5-phospho-alpha-D-ribose 1-diphosphate-binding positions include R37 to G38, R69, and D88 to T96. R69 contacts GMP. Position 89 (D89) interacts with Mg(2+). 2 residues coordinate guanine: D92 and I135. D92 and I135 together coordinate xanthine. GMP is bound by residues D92 to T96 and W134 to I135.

This sequence belongs to the purine/pyrimidine phosphoribosyltransferase family. XGPT subfamily. In terms of assembly, homotetramer. Requires Mg(2+) as cofactor.

It is found in the cell inner membrane. It catalyses the reaction GMP + diphosphate = guanine + 5-phospho-alpha-D-ribose 1-diphosphate. It carries out the reaction XMP + diphosphate = xanthine + 5-phospho-alpha-D-ribose 1-diphosphate. The catalysed reaction is IMP + diphosphate = hypoxanthine + 5-phospho-alpha-D-ribose 1-diphosphate. It participates in purine metabolism; GMP biosynthesis via salvage pathway; GMP from guanine: step 1/1. The protein operates within purine metabolism; XMP biosynthesis via salvage pathway; XMP from xanthine: step 1/1. Functionally, purine salvage pathway enzyme that catalyzes the transfer of the ribosyl-5-phosphate group from 5-phospho-alpha-D-ribose 1-diphosphate (PRPP) to the N9 position of the 6-oxopurines guanine and xanthine to form the corresponding ribonucleotides GMP (guanosine 5'-monophosphate) and XMP (xanthosine 5'-monophosphate), with the release of PPi. To a lesser extent, also acts on hypoxanthine. The protein is Xanthine-guanine phosphoribosyltransferase of Erwinia tasmaniensis (strain DSM 17950 / CFBP 7177 / CIP 109463 / NCPPB 4357 / Et1/99).